Reading from the N-terminus, the 558-residue chain is MMIDPSKKYRPFPPVALADRTWPSATITKAPIWCAVDLRDGNQALVEPMGADRKVRMFQLLCELGYKEIEVGFPSASQTDFDFLRQLIERDMIPADVTIQVLTQAREDLISRTFQALEGASSAIVHLYNSTSTLQRRVVFALDRAGITDLAVRGAEMVREGAAKASASTKLRFQYSPESFTGTELDYAVEICEAVMGVFEPTAEAPLILNLPSTVEMATPNVYADQIEWFCRALPHRDRVLISLHPHNDRGTAVAAAELALMAGADRIEGTLFGNGERTGNVDLVTLGMNMFTQGIDPGIDFSNIDHIREIAEECNRLPVHPRHPYAGDLVFTAFSGSHQDAINKGLHAMEKTNQDVWEVPYLPIDPKDIGRSYEAVIRVNSQSGKGGVAHILERDYGIRMPRGLQVEFSKVVQAITDTTGEEITSRGLWKTFEETYLGAGSPYSFLEHHTRPDPAGKDQRILTATVKAGGKVRDIDGRGTGPIEALVDALRKDSGLAITIEDYEEHTLRPGSDAQAVAFIKASLPDGRAHYGVGIDANFVVASLKAVLCAANHLSDK.

In terms of domain architecture, Pyruvate carboxyltransferase spans 31–306; the sequence is PIWCAVDLRD…DPGIDFSNID (276 aa). Positions 40, 245, 247, and 281 each coordinate Mg(2+). Residues 440–558 are regulatory domain; the sequence is AGSPYSFLEH…LCAANHLSDK (119 aa).

Belongs to the alpha-IPM synthase/homocitrate synthase family. LeuA type 2 subfamily. As to quaternary structure, homodimer. The cofactor is Mg(2+).

It is found in the cytoplasm. It carries out the reaction 3-methyl-2-oxobutanoate + acetyl-CoA + H2O = (2S)-2-isopropylmalate + CoA + H(+). It participates in amino-acid biosynthesis; L-leucine biosynthesis; L-leucine from 3-methyl-2-oxobutanoate: step 1/4. Catalyzes the condensation of the acetyl group of acetyl-CoA with 3-methyl-2-oxobutanoate (2-ketoisovalerate) to form 3-carboxy-3-hydroxy-4-methylpentanoate (2-isopropylmalate). In Rhodospirillum rubrum (strain ATCC 11170 / ATH 1.1.1 / DSM 467 / LMG 4362 / NCIMB 8255 / S1), this protein is 2-isopropylmalate synthase.